Here is a 184-residue protein sequence, read N- to C-terminus: Protein MEH1 (184 aa).

Residue Gly-2 is the site of N-myristoyl glycine attachment. S-palmitoyl cysteine attachment occurs at residues Cys-7 and Cys-8. Residues 30–71 (QGNANDEYDAEQMRLKEHEHEQKLLAREQELRDIVANTNDKL) are a coiled coil. The segment at 89-147 (LQEALDKRQQEEGGDSREDERSAGDDNLSGHSVPSSGSAQATTHQTAPRTNTFTLLTSP) is disordered. Residues 92-112 (ALDKRQQEEGGDSREDERSAG) are compositionally biased toward basic and acidic residues. A compositionally biased stretch (polar residues) spans 117–147 (SGHSVPSSGSAQATTHQTAPRTNTFTLLTSP). Residues Ser-146 and Ser-149 each carry the phosphoserine modification.

In terms of assembly, component of the GSE complex composed of GTR1, GTR2, SLM4, MEH1 and LTV1. Component of the EGO complex, at least composed of GTR2, SLM4 and MEH1.

The protein resides in the vacuole membrane. Functionally, component of the GSE complex, a GTPase complex required for intracellular sorting of GAP1 out of the endosome. Component of the EGO complex, a complex involved in the regulation of microautophagy. This chain is Protein MEH1 (MEH1), found in Saccharomyces cerevisiae (strain ATCC 204508 / S288c) (Baker's yeast).